Reading from the N-terminus, the 280-residue chain is 2-dehydro-3-deoxyphosphooctonate aldolase (280 aa).

Belongs to the KdsA family.

The protein localises to the cytoplasm. It carries out the reaction D-arabinose 5-phosphate + phosphoenolpyruvate + H2O = 3-deoxy-alpha-D-manno-2-octulosonate-8-phosphate + phosphate. The protein operates within carbohydrate biosynthesis; 3-deoxy-D-manno-octulosonate biosynthesis; 3-deoxy-D-manno-octulosonate from D-ribulose 5-phosphate: step 2/3. It participates in bacterial outer membrane biogenesis; lipopolysaccharide biosynthesis. This Rhizobium meliloti (strain 1021) (Ensifer meliloti) protein is 2-dehydro-3-deoxyphosphooctonate aldolase.